A 434-amino-acid polypeptide reads, in one-letter code: 4-hydroxyphenylpyruvate dioxygenase (434 aa).

Residues 1-21 (MPPTPTTPAATGAAAAVTPEH) are disordered. Residues 7 to 19 (TPAATGAAAAVTP) are compositionally biased toward low complexity. 2 VOC domains span residues 41–192 (SFHH…FLPG) and 208–368 (RFDH…IFTK). 3 residues coordinate Fe cation: His211, His293, and Glu379.

This sequence belongs to the 4HPPD family. It depends on Fe cation as a cofactor.

It localises to the cytoplasm. The enzyme catalyses 3-(4-hydroxyphenyl)pyruvate + O2 = homogentisate + CO2. It functions in the pathway amino-acid degradation; L-phenylalanine degradation; acetoacetate and fumarate from L-phenylalanine: step 3/6. It participates in cofactor biosynthesis; prenylquinone biosynthesis. The sequence is that of 4-hydroxyphenylpyruvate dioxygenase from Hordeum vulgare (Barley).